The sequence spans 215 residues: UPF0502 protein Shal_1801 (215 aa).

This sequence belongs to the UPF0502 family.

The polypeptide is UPF0502 protein Shal_1801 (Shewanella halifaxensis (strain HAW-EB4)).